The primary structure comprises 631 residues: Phosphomethylpyrimidine synthase (631 aa).

Residues N239, M268, Y297, H333, 353 to 355, 394 to 397, and E433 each bind substrate; these read SRG and DGLR. H437 provides a ligand contact to Zn(2+). Y460 is a binding site for substrate. Residue H501 coordinates Zn(2+). The [4Fe-4S] cluster site is built by C581, C584, and C589.

The protein belongs to the ThiC family. In terms of assembly, homodimer. [4Fe-4S] cluster serves as cofactor.

It carries out the reaction 5-amino-1-(5-phospho-beta-D-ribosyl)imidazole + S-adenosyl-L-methionine = 4-amino-2-methyl-5-(phosphooxymethyl)pyrimidine + CO + 5'-deoxyadenosine + formate + L-methionine + 3 H(+). It functions in the pathway cofactor biosynthesis; thiamine diphosphate biosynthesis. In terms of biological role, catalyzes the synthesis of the hydroxymethylpyrimidine phosphate (HMP-P) moiety of thiamine from aminoimidazole ribotide (AIR) in a radical S-adenosyl-L-methionine (SAM)-dependent reaction. The chain is Phosphomethylpyrimidine synthase from Shigella dysenteriae serotype 1 (strain Sd197).